The primary structure comprises 1362 residues: Mediator of RNA polymerase II transcription subunit 12 (1362 aa).

A disordered region spans residues 31 to 51 (LRPPDDIHPLVDPARIGDSVY).

Belongs to the Mediator complex subunit 12 family. As to quaternary structure, component of the SRB8-11 complex, which itself associates with the Mediator complex.

The protein localises to the nucleus. Functionally, component of the SRB8-11 complex. The SRB8-11 complex is a regulatory module of the Mediator complex which is itself involved in regulation of basal and activated RNA polymerase II-dependent transcription. The SRB8-11 complex may be involved in the transcriptional repression of a subset of genes regulated by Mediator. It may inhibit the association of the Mediator complex with RNA polymerase II to form the holoenzyme complex. This chain is Mediator of RNA polymerase II transcription subunit 12 (SRB8), found in Yarrowia lipolytica (strain CLIB 122 / E 150) (Yeast).